We begin with the raw amino-acid sequence, 198 residues long: Nucleoplasmin (198 aa).

Positions 35-38 (SDED) are acidic tract A1. The span at 125–145 (SWAEEEGEEEVEEEEEEEDPE) shows a compositional bias: acidic residues. The segment at 125–198 (SWAEEEGEEE…GRGRKPAAKK (74 aa)) is disordered. Residues 128 to 145 (EEEGEEEVEEEEEEEDPE) are acidic tract A2. Residues 150-167 (AVKRPAASKKGSQAKKKK) show a composition bias toward basic residues. Residues 152–167 (KRPAASKKGSQAKKKK) carry the Bipartite nuclear localization signal motif. Residues 172–174 (EEE) are acidic tract A3. Over residues 183 to 198 (KKGKGAGRGRKPAAKK) the composition is skewed to basic residues.

Belongs to the nucleoplasmin family. In terms of assembly, homopentamer. Expressed in oocytes.

Its subcellular location is the nucleus. Acts as a chaperone for histones, such as histone H2A-H2B, and thus regulates the assembly of nucleosome cores. Involved in chromatin remodeling, especially during fertilization and early embryonic development. May be involved in sperm chromatin decondensation during fertilization. The polypeptide is Nucleoplasmin (Rhinella marina (Cane toad)).